The primary structure comprises 125 residues: Large ribosomal subunit protein bL12 (125 aa).

The protein belongs to the bacterial ribosomal protein bL12 family. Homodimer. Part of the ribosomal stalk of the 50S ribosomal subunit. Forms a multimeric L10(L12)X complex, where L10 forms an elongated spine to which 2 to 4 L12 dimers bind in a sequential fashion. Binds GTP-bound translation factors.

In terms of biological role, forms part of the ribosomal stalk which helps the ribosome interact with GTP-bound translation factors. Is thus essential for accurate translation. This Endomicrobium trichonymphae protein is Large ribosomal subunit protein bL12.